A 292-amino-acid polypeptide reads, in one-letter code: Shikimate dehydrogenase (NADP(+)) (292 aa).

Shikimate-binding positions include Ser-22 to Ser-24 and Ser-69. Lys-73 serves as the catalytic Proton acceptor. Shikimate-binding residues include Asn-94 and Asp-111. NADP(+)-binding positions include Gly-135–Ala-139 and Ile-236. Position 238 (Tyr-238) interacts with shikimate. Gly-260 contributes to the NADP(+) binding site.

It belongs to the shikimate dehydrogenase family. Homodimer.

The enzyme catalyses shikimate + NADP(+) = 3-dehydroshikimate + NADPH + H(+). Its pathway is metabolic intermediate biosynthesis; chorismate biosynthesis; chorismate from D-erythrose 4-phosphate and phosphoenolpyruvate: step 4/7. Its function is as follows. Involved in the biosynthesis of the chorismate, which leads to the biosynthesis of aromatic amino acids. Catalyzes the reversible NADPH linked reduction of 3-dehydroshikimate (DHSA) to yield shikimate (SA). The chain is Shikimate dehydrogenase (NADP(+)) from Streptococcus pyogenes serotype M28 (strain MGAS6180).